Reading from the N-terminus, the 221-residue chain is Endonuclease V (221 aa).

Asp-43 and Asp-109 together coordinate Mg(2+).

This sequence belongs to the endonuclease V family. Mg(2+) serves as cofactor.

It localises to the cytoplasm. The catalysed reaction is Endonucleolytic cleavage at apurinic or apyrimidinic sites to products with a 5'-phosphate.. In terms of biological role, DNA repair enzyme involved in the repair of deaminated bases. Selectively cleaves double-stranded DNA at the second phosphodiester bond 3' to a deoxyinosine leaving behind the intact lesion on the nicked DNA. The chain is Endonuclease V from Petrotoga mobilis (strain DSM 10674 / SJ95).